The following is an 819-amino-acid chain: MFERFTEKAIKVIMLAQEEARRLGHNFVGTEQILLGLIGEGTGIAAKVLKSMGVNLKDARVEVEKIIGRGSGFVAVEIPFTPRAKRVLELSLEEARQLGHNYIGTEHLLLGLIREGEGVAARVLENLALDLTKVRTQVIRLLGDTAEVSATNGQTKGKTPTLEEFGSNLTQKAAEGKLDPVIGRQKEIERVIQILGRRTKNNPILIGEPGVGKTAIAEGLAQRINNRDVPDILEDKRVVTLDIGLLVAGTKYRGEFEERLKKIIDEIRVANNVILVIDEVHTLIGAGAAEGAIDAANILKPALARGEMQCIGATTLEEYRKHIEKDSALERRFQPVMVGEPSVEETIEILYGLRDRYEKHHKLVISDEALSAAAKFADQYIADRFLPDKAIDLIDEAGSRVRLMNSQLPPAARELDKELREILKQKDEAVRSQDFETAGQLRDREMEIKAQIAAIAHSKKGDEENTKEVSVVTEEDIAQIVAAWTGIPVNKMTRSESEKLLQMEETLHGRIIGQDEAVVAVSKAIRRARVGLKNPNRPIASFIFSGPTGVGKTELTKALASYFFGSEEAMVRLDMSEYMERHTVSKLIGSPPGYVGYNEGGQLTESVRRRPYTVVLFDEIEKGHPDVFNLLLQILEDGRLTDSKGRTVDFKNTLLILTSNVGSKVIEKGGGGLGFDLSEDQTESQYGRIKALVNEELKQYFRPEFLNRLDEIIVFRQLTKDEVGEIAEIMLKEVFTRISEKGIQLEVTARFKTHLINEGYNPIYGARPLRRAVMRLLEDTLSEEFLAEKIKEGDTAVVDVDDDGKVKVLLGEKLELVAN.

Residues 2-144 (FERFTEKAIK…RTQVIRLLGD (143 aa)) enclose the Clp R domain. 2 repeat regions span residues 5–70 (FTEK…IGRG) and 80–144 (FTPR…LLGD). The interval 162–409 (LEEFGSNLTQ…RVRLMNSQLP (248 aa)) is i. 207–214 (GEPGVGKT) is an ATP binding site. Residues 416–451 (DKELREILKQKDEAVRSQDFETAGQLRDREMEIKAQ) enclose the UVR domain. Positions 472–663 (VTEEDIAQIV…LLILTSNVGS (192 aa)) are II. 546 to 553 (GPTGVGKT) serves as a coordination point for ATP.

This sequence belongs to the ClpA/ClpB family.

It localises to the plastid. The protein resides in the chloroplast. In terms of biological role, may interact with a ClpP-like protease involved in degradation of denatured proteins in the chloroplast. In Guillardia theta (Cryptophyte), this protein is ATP-dependent Clp protease ATP-binding subunit ClpA homolog (clpC).